A 492-amino-acid polypeptide reads, in one-letter code: Probable malate:quinone oxidoreductase 1 (492 aa).

The protein belongs to the MQO family. Requires FAD as cofactor.

It carries out the reaction (S)-malate + a quinone = a quinol + oxaloacetate. It participates in carbohydrate metabolism; tricarboxylic acid cycle; oxaloacetate from (S)-malate (quinone route): step 1/1. The polypeptide is Probable malate:quinone oxidoreductase 1 (Staphylococcus epidermidis (strain ATCC 35984 / DSM 28319 / BCRC 17069 / CCUG 31568 / BM 3577 / RP62A)).